An 814-amino-acid polypeptide reads, in one-letter code: MNKTIVLAGDRNYTRQLETTIKSILYHNRDVKIYILNQDIMPDWFRKPRKIARMLGSEIIDVKLPEQTVFQDWEKQDHISSITYARYFIADYIQEDKVLYLDSDLIVNTSLEKLFSICLEEKSLAAVKDTDGITFNAGVLLINNKKWRQEKLKERLIEQSIVTMKEVEEGRFEHFNGDQTIFNQVLQDDWLELGRAYNLQVGHDIVALYNNWQEHLAFNDKPVVIHFTTYRKPWTTLTANRYRDLWWEFHDLEWSQILQHHMGEFELISPLDKEFSCLTLTNSQDLEGIEELVTALPEVVFHIAAWTDMGDKLKKLAVYNNVRLHPQIVPPVLDKLKKSTNLYLDINHGSADENFLKSLQEQEKTLLAFQSTQHGELGQIVFENGKVSFMIDTIKDFKKNGHLTCFRQLPSLTCLTFTASQYIEQLDYLAGQLPNVVFQIAAWTAMGPKLYDLSNRYPNIQLYPAISRDKLDELKEKMDAYLDINLLTSTSDIVAEMAHLSKPILAFYKSQNGNNGQRLYSSEHPERMLADLQKLITKDMLEKPLDIIQVKGIDETLDYIIEHNSSLVRFGDGEINMLAGHSIPYQDYDEELVSIMRDIIGQESREDLVVCLPDAFTDRFRFTSWAIPFWKDHMDHYMDFYRELCSDSWYGSTFVSRPYIDFEDKSQAKAQFEKLKSIWENRDLLIVEGATSRSGVGNDLFDEANSIKRIICPSHSAFSRVHELEQEIEKYAGGRLILCMLGPTAKVLSYNLCQMGYQVLDVGHIDSEYEWMKMGAKTKVKFSHKHTAEHNFDQDIEFIDDETYNSQIVARILN.

The segment at 1–264 (MNKTIVLAGD…SQILQHHMGE (264 aa)) is GT8 domain. UDP contacts are provided by residues 8–13 (AGDRNY) and 102–103 (DS). Mn(2+)-binding residues include aspartate 102, aspartate 104, and histidine 226. Position 226–232 (226–232 (HFTTYRK)) interacts with UDP. Residues 542–814 (EKPLDIIQVK…NSQIVARILN (273 aa)) form a GT-D domain region.

In the N-terminal section; belongs to the glycosyltransferase 8 family. The protein in the C-terminal section; belongs to the GT-D family.

The protein operates within protein modification; protein glycosylation. Its function is as follows. Involved in the polymorphic O-glycosylation of the serine-rich repeat protein PsrP. Catalyzes the third step in glycosylation PsrP in this bacteria. Transfers glucose from UDP-glucose to the terminal glucose moiety of already-glycosylated PsrP (using truncated substrates with PsrP SSR1-GlcNAc-Glc); the C-terminal GT-D domain is sufficient for this reaction in vitro. Also transfers galactose from UDP-galactose to the terminal glucose moiety of already-glycosylated PsrP; the C-terminal GT-D domain is also sufficient for this reaction in vitro. Activity is much higher with UDP-glucose, and the enzyme has a very marked preference for PsrP substrate that has already been modified by GlcNAc and glucose. In vitro has hydrolytic activity against UDP-galactose and to a lesser extent against UDP-glucose. Also catalyzes the fourth step in glycosylation of PsrP in this bacteria. Can transfer the sugar from both UDP-glucose and UDP-galactose to the terminal sugar moiety of PsrP-GlcNAc-Glc-Glc and PsrP-GlcNAc-Glc-Gal; the C-terminal GT-D domain is also sufficient for this reaction in vitro (using truncated substrates with glycosylated PsrP SSR1). The N-terminal GT-D domain can transfer galactose from UDP-galactose to PsrP-GlcNAc-Glc-Gal or PsrP-GlcNAc-Glc-Glc in the fourth step. This is Glycosyltransferase GlyD from Streptococcus pneumoniae serotype 4 (strain ATCC BAA-334 / TIGR4).